The chain runs to 448 residues: uncharacterized protein (448 aa).

In terms of domain architecture, uDENN spans 4–155 (QAIVLATFDA…SAVNLEFDSL (152 aa)). The region spanning 183–326 (LDHLGPAFYC…FKGLSRYLSF (144 aa)) is the cDENN domain. The region spanning 328–428 (GESSWGLTTY…WQYGKYFWLR (101 aa)) is the dDENN domain. The chain crosses the membrane as a helical span at residues 425–447 (FWLRRVSLIFLASTCFLFILWKL).

It is found in the golgi apparatus membrane. The protein resides in the endoplasmic reticulum membrane. This is an uncharacterized protein from Schizosaccharomyces pombe (strain 972 / ATCC 24843) (Fission yeast).